The sequence spans 342 residues: Nuclear distribution protein nudE homolog 1 (342 aa).

Residues 45-189 (REYEAELETQ…ELAVQQKQEK (145 aa)) are a coiled coil. The tract at residues 89-157 (EWYRQVSALE…ERNAFLESEL (69 aa)) is interaction with PAFAH1B1. 2 disordered regions span residues 182-203 (AVQQ…TERT) and 320-342 (GTRP…KMLL). Positions 322 to 342 (RPSSTPGPMSHPSQSVVKMLL) are enriched in polar residues.

This sequence belongs to the nudE family. As to quaternary structure, self-associates. Interacts with PAFAH1B1. Post-translationally, phosphorylated in mitosis.

The protein localises to the cytoplasm. It is found in the cytoskeleton. It localises to the microtubule organizing center. The protein resides in the centrosome. Its subcellular location is the spindle. The protein localises to the chromosome. It is found in the centromere. It localises to the kinetochore. The protein resides in the cleavage furrow. Its subcellular location is the cytoplasmic vesicle membrane. In terms of biological role, required for centrosome duplication and formation and function of the mitotic spindle. This chain is Nuclear distribution protein nudE homolog 1 (NDE1), found in Gallus gallus (Chicken).